A 193-amino-acid chain; its full sequence is Potassium-transporting ATPase KdpC subunit (193 aa).

A helical membrane pass occupies residues 14-34 (ITFTFLVLCGLVYPLIVTGIA).

It belongs to the KdpC family. In terms of assembly, the system is composed of three essential subunits: KdpA, KdpB and KdpC.

The protein resides in the cell membrane. In terms of biological role, part of the high-affinity ATP-driven potassium transport (or Kdp) system, which catalyzes the hydrolysis of ATP coupled with the electrogenic transport of potassium into the cytoplasm. This subunit acts as a catalytic chaperone that increases the ATP-binding affinity of the ATP-hydrolyzing subunit KdpB by the formation of a transient KdpB/KdpC/ATP ternary complex. The sequence is that of Potassium-transporting ATPase KdpC subunit from Bacillus cereus (strain AH820).